The chain runs to 1505 residues: Probable serine/threonine-protein kinase irlD (1505 aa).

The span at 1-18 (MGPKKGKRSHSKNHHHHN) shows a compositional bias: basic residues. 4 disordered regions span residues 1 to 30 (MGPK…NSGG), 121 to 211 (IPQP…NNIL), 548 to 571 (TTTT…DKEN), and 862 to 1013 (EENE…TIAT). Over residues 139–158 (SISTTTTTTTATAIEIESSS) the composition is skewed to low complexity. A compositionally biased stretch (polar residues) spans 159–172 (GLTSNITDSTEIQL). 2 stretches are compositionally biased toward low complexity: residues 173–209 (DSTT…NSNN) and 548–561 (TTTT…TTTT). Composition is skewed to basic and acidic residues over residues 562–571 (IDKDEKDKEN) and 862–882 (EENE…EKKK). Residues 846 to 892 (IRTEESLKAEKDLLEQEENEKKRLKEKRKKEEKEKKKQQNLKQKSLI) are a coiled coil. Low complexity predominate over residues 896 to 924 (TTTTTTTTPIPITVPIPTQTQTPTQTPTQ). Over residues 925-943 (TPIPTPIPTTPIPTTPIPI) the composition is skewed to pro residues. Low complexity-rich tracts occupy residues 944-954 (PIQLTPTTPKT) and 960-977 (TPKT…KTPK). Over residues 978-989 (NSTLDKQTISTP) the composition is skewed to polar residues. Residues 1054-1324 (RKDEFIIGRG…TENILLHPFF (271 aa)) form the Protein kinase domain. ATP-binding positions include 1060-1068 (IGRGSNGTL) and Lys-1083. Asp-1194 serves as the catalytic Proton acceptor. One can recognise a KEN domain in the interval 1327–1505 (HEKKVKFIDA…LIYFNDLIIK (179 aa)).

It belongs to the protein kinase superfamily. Ser/Thr protein kinase family.

It carries out the reaction L-seryl-[protein] + ATP = O-phospho-L-seryl-[protein] + ADP + H(+). The catalysed reaction is L-threonyl-[protein] + ATP = O-phospho-L-threonyl-[protein] + ADP + H(+). This Dictyostelium discoideum (Social amoeba) protein is Probable serine/threonine-protein kinase irlD (irlD).